A 55-amino-acid chain; its full sequence is Ferredoxin (55 aa).

2 4Fe-4S ferredoxin-type domains span residues 2 to 27 (FVINDSCVSCGACAGECPVSAITQGD) and 28 to 55 (TQFVIDADTCIDCGNCANVCPVGAPNQE). 8 residues coordinate [4Fe-4S] cluster: cysteine 8, cysteine 11, cysteine 14, cysteine 18, cysteine 37, cysteine 40, cysteine 43, and cysteine 47.

It depends on [4Fe-4S] cluster as a cofactor.

In terms of biological role, ferredoxins are iron-sulfur proteins that transfer electrons in a wide variety of metabolic reactions. The polypeptide is Ferredoxin (Clostridium butyricum).